A 248-amino-acid chain; its full sequence is 4-hydroxy-tetrahydrodipicolinate reductase (248 aa).

NAD(+) is bound by residues Asp32, 74–76 (GTT), and 99–102 (SANF). The Proton donor/acceptor role is filled by His134. His135 provides a ligand contact to (S)-2,3,4,5-tetrahydrodipicolinate. The active-site Proton donor is Lys138. (S)-2,3,4,5-tetrahydrodipicolinate is bound at residue 144 to 145 (GT).

This sequence belongs to the DapB family.

It is found in the cytoplasm. The catalysed reaction is (S)-2,3,4,5-tetrahydrodipicolinate + NAD(+) + H2O = (2S,4S)-4-hydroxy-2,3,4,5-tetrahydrodipicolinate + NADH + H(+). It carries out the reaction (S)-2,3,4,5-tetrahydrodipicolinate + NADP(+) + H2O = (2S,4S)-4-hydroxy-2,3,4,5-tetrahydrodipicolinate + NADPH + H(+). It functions in the pathway amino-acid biosynthesis; L-lysine biosynthesis via DAP pathway; (S)-tetrahydrodipicolinate from L-aspartate: step 4/4. Its function is as follows. Catalyzes the conversion of 4-hydroxy-tetrahydrodipicolinate (HTPA) to tetrahydrodipicolinate. The protein is 4-hydroxy-tetrahydrodipicolinate reductase of Chlorobium luteolum (strain DSM 273 / BCRC 81028 / 2530) (Pelodictyon luteolum).